Here is a 299-residue protein sequence, read N- to C-terminus: MQESINDLNINPQGIYIDATFGRGGHSKAILNRLTTGRLIAFDKDLDAISYARENFQFSNFEIVHASFASIYDYCLQHSLLGKIDGIIMDLGVSSPQLDNAARGFSFTHNGPLDMRMDVSKGITASQALEELSVDDLSYIFKVYGEERFAKKIALRIKDYIQQNGSIRTTLELAELIRATIGKKEKKNPATRCFQALRIYVNNELKDLEALLENILAVIKSGGRIAVISFHSLEDRIVKQKFSALINPKQELNRITKMLPQDSSQIKLKWITKKSKANEDELNQNVRSRSAILRVVEKL.

S-adenosyl-L-methionine-binding positions include 24 to 26 (GGH), Asp43, Phe68, Asp90, and Gln97.

Belongs to the methyltransferase superfamily. RsmH family.

The protein localises to the cytoplasm. The catalysed reaction is cytidine(1402) in 16S rRNA + S-adenosyl-L-methionine = N(4)-methylcytidine(1402) in 16S rRNA + S-adenosyl-L-homocysteine + H(+). Its function is as follows. Specifically methylates the N4 position of cytidine in position 1402 (C1402) of 16S rRNA. The sequence is that of Ribosomal RNA small subunit methyltransferase H from Francisella tularensis subsp. tularensis (strain WY96-3418).